The following is a 50-amino-acid chain: Large ribosomal subunit protein eL40 (50 aa).

It belongs to the eukaryotic ribosomal protein eL40 family.

This Aeropyrum pernix (strain ATCC 700893 / DSM 11879 / JCM 9820 / NBRC 100138 / K1) protein is Large ribosomal subunit protein eL40.